A 356-amino-acid polypeptide reads, in one-letter code: Histidinol-phosphate aminotransferase (356 aa).

At Lys-213 the chain carries N6-(pyridoxal phosphate)lysine.

It belongs to the class-II pyridoxal-phosphate-dependent aminotransferase family. Histidinol-phosphate aminotransferase subfamily. In terms of assembly, homodimer. Pyridoxal 5'-phosphate serves as cofactor.

The catalysed reaction is L-histidinol phosphate + 2-oxoglutarate = 3-(imidazol-4-yl)-2-oxopropyl phosphate + L-glutamate. It participates in amino-acid biosynthesis; L-histidine biosynthesis; L-histidine from 5-phospho-alpha-D-ribose 1-diphosphate: step 7/9. This is Histidinol-phosphate aminotransferase from Clostridium novyi (strain NT).